A 146-amino-acid polypeptide reads, in one-letter code: VHLTPEEKNAVTALWGKVNVDEVGGEALGRLLVVYPWTQRFFDSFGDLSSPAAVMGNPKVKAHGKKVLGAFSDGLNHLDNLKGTFAQLSELHCDKLHVDPENFKLLGNVLVCVLAHHFGKEFTPQVQAAYQKVVAGVANALAHKYH.

An N-acetylvaline modification is found at Val1. Residues 2–146 (HLTPEEKNAV…VANALAHKYH (145 aa)) enclose the Globin domain. Position 12 is a phosphothreonine (Thr12). Residue Ser44 is modified to Phosphoserine. Residue Lys59 is modified to N6-acetyllysine. Residue His63 participates in heme b binding. Lys82 carries the post-translational modification N6-acetyllysine. Position 92 (His92) interacts with heme b. The residue at position 93 (Cys93) is an S-nitrosocysteine. The residue at position 144 (Lys144) is an N6-acetyllysine.

Belongs to the globin family. In terms of assembly, heterotetramer of two alpha chains and two beta chains. Red blood cells.

Functionally, involved in oxygen transport from the lung to the various peripheral tissues. This is Hemoglobin subunit beta (HBB) from Papio cynocephalus (Yellow baboon).